The sequence spans 131 residues: DCPSDWSSYDQYCYRVFKRIQTWEDAERFCSEQANDGHLVSIESAGEADFVTQLVSENIRSEKHYVWIGLRVQGKGQQCSSEWSDGSSVHYDNLQENKTRKCYGLEKRAEFRTWSNVYCGHEYPFVCKFXR.

The C-type lectin domain maps to 1-131 (DCPSDWSSYD…EYPFVCKFXR (131 aa)). 3 disulfide bridges follow: Cys-2/Cys-13, Cys-30/Cys-127, and Cys-102/Cys-119.

Belongs to the snaclec family. As to quaternary structure, heterotetramer of the subunits alpha, alpha', beta and beta'; disulfide-linked. Expressed by the venom gland.

It is found in the secreted. In terms of biological role, potent platelet activator that aggregates platelets via both GPIbalpha (GP1BA) and GPVI (GP6). Induces a tyrosine phosphorylation profile in platelets that resembles this produced by collagen, involving the time dependent tyrosine phosphorylation of Fc receptor gamma chain (FCGR1A), phospholipase Cgamma2 (PLCG2), and LAT. The chain is Snaclec alboaggregin-A subunit alpha from Trimeresurus albolabris (White-lipped pit viper).